We begin with the raw amino-acid sequence, 185 residues long: UPF0397 protein CPF_1836 (185 aa).

A run of 5 helical transmembrane segments spans residues 11–31 (IVAI…GSLP), 44–64 (AFLA…IGFI), 71–91 (IVFF…VGLI), 111–131 (IFMF…LVAP), and 149–169 (GVIG…ILIA).

It belongs to the UPF0397 family.

Its subcellular location is the cell membrane. The chain is UPF0397 protein CPF_1836 from Clostridium perfringens (strain ATCC 13124 / DSM 756 / JCM 1290 / NCIMB 6125 / NCTC 8237 / Type A).